Here is a 229-residue protein sequence, read N- to C-terminus: 2-C-methyl-D-erythritol 4-phosphate cytidylyltransferase (229 aa).

The protein belongs to the IspD/TarI cytidylyltransferase family. IspD subfamily.

It carries out the reaction 2-C-methyl-D-erythritol 4-phosphate + CTP + H(+) = 4-CDP-2-C-methyl-D-erythritol + diphosphate. Its pathway is isoprenoid biosynthesis; isopentenyl diphosphate biosynthesis via DXP pathway; isopentenyl diphosphate from 1-deoxy-D-xylulose 5-phosphate: step 2/6. In terms of biological role, catalyzes the formation of 4-diphosphocytidyl-2-C-methyl-D-erythritol from CTP and 2-C-methyl-D-erythritol 4-phosphate (MEP). The chain is 2-C-methyl-D-erythritol 4-phosphate cytidylyltransferase from Clostridium botulinum (strain Langeland / NCTC 10281 / Type F).